A 241-amino-acid chain; its full sequence is tRNA (guanine-N(1)-)-methyltransferase (241 aa).

S-adenosyl-L-methionine contacts are provided by residues Gly-123 and 143–148; that span reads IGDYVL.

It belongs to the RNA methyltransferase TrmD family. Homodimer.

It localises to the cytoplasm. The catalysed reaction is guanosine(37) in tRNA + S-adenosyl-L-methionine = N(1)-methylguanosine(37) in tRNA + S-adenosyl-L-homocysteine + H(+). Its function is as follows. Specifically methylates guanosine-37 in various tRNAs. The polypeptide is tRNA (guanine-N(1)-)-methyltransferase (Roseobacter denitrificans (strain ATCC 33942 / OCh 114) (Erythrobacter sp. (strain OCh 114))).